A 134-amino-acid polypeptide reads, in one-letter code: ATP synthase epsilon chain (134 aa).

Belongs to the ATPase epsilon chain family. F-type ATPases have 2 components, CF(1) - the catalytic core - and CF(0) - the membrane proton channel. CF(1) has five subunits: alpha(3), beta(3), gamma(1), delta(1), epsilon(1). CF(0) has three main subunits: a, b and c.

It is found in the cell membrane. Functionally, produces ATP from ADP in the presence of a proton gradient across the membrane. This Pelotomaculum thermopropionicum (strain DSM 13744 / JCM 10971 / SI) protein is ATP synthase epsilon chain.